Reading from the N-terminus, the 264-residue chain is MADDPFVLGDTPFSSRLIMGTGGAPSLDILERALVASGTELTTVAMRRVDAGVHGSVLSVLDRLGIRVLPNTAGCFTAGEAVLTARLAREALGTDLIKLEVIADERTLLPDPIELLDAAETLVDDGFTVLPYTNDDPVLARKLEDVGCAAVMPLGSPIGSGLGIRNPHNFQLIVEHARVPVILDAGAGTASDVALAMELGCAGVMLASAVTRAQEPVLMAEGMRHAVDAGRLAYRAGRIPRRHFAEASSPPEGRAHLDPERPAF.

The active-site Schiff-base intermediate with DXP is Lys-98. Residues Gly-159, 185 to 186, and 207 to 208 each bind 1-deoxy-D-xylulose 5-phosphate; these read AG and AS. A disordered region spans residues 243 to 264; it reads HFAEASSPPEGRAHLDPERPAF. The segment covering 253-264 has biased composition (basic and acidic residues); sequence GRAHLDPERPAF.

It belongs to the ThiG family. As to quaternary structure, homotetramer. Forms heterodimers with either ThiH or ThiS.

It is found in the cytoplasm. The catalysed reaction is [ThiS sulfur-carrier protein]-C-terminal-Gly-aminoethanethioate + 2-iminoacetate + 1-deoxy-D-xylulose 5-phosphate = [ThiS sulfur-carrier protein]-C-terminal Gly-Gly + 2-[(2R,5Z)-2-carboxy-4-methylthiazol-5(2H)-ylidene]ethyl phosphate + 2 H2O + H(+). It functions in the pathway cofactor biosynthesis; thiamine diphosphate biosynthesis. Functionally, catalyzes the rearrangement of 1-deoxy-D-xylulose 5-phosphate (DXP) to produce the thiazole phosphate moiety of thiamine. Sulfur is provided by the thiocarboxylate moiety of the carrier protein ThiS. In vitro, sulfur can be provided by H(2)S. The protein is Thiazole synthase of Streptomyces avermitilis (strain ATCC 31267 / DSM 46492 / JCM 5070 / NBRC 14893 / NCIMB 12804 / NRRL 8165 / MA-4680).